The chain runs to 274 residues: 2,3,4,5-tetrahydropyridine-2,6-dicarboxylate N-succinyltransferase (274 aa).

This sequence belongs to the transferase hexapeptide repeat family.

The protein resides in the cytoplasm. The enzyme catalyses (S)-2,3,4,5-tetrahydrodipicolinate + succinyl-CoA + H2O = (S)-2-succinylamino-6-oxoheptanedioate + CoA. The protein operates within amino-acid biosynthesis; L-lysine biosynthesis via DAP pathway; LL-2,6-diaminopimelate from (S)-tetrahydrodipicolinate (succinylase route): step 1/3. This is 2,3,4,5-tetrahydropyridine-2,6-dicarboxylate N-succinyltransferase from Salmonella agona (strain SL483).